Here is a 617-residue protein sequence, read N- to C-terminus: Ceramide transfer protein (617 aa).

Over residues 1–11 the composition is skewed to polar residues; that stretch reads MSDNQSWNSSG. The segment at 1–23 is disordered; that stretch reads MSDNQSWNSSGSEEDLEPESGPP. A PH domain is found at 23–117; sequence PVERCGVLSK…WIDSIEQHKS (95 aa). Residues 268 to 302 are a coiled coil; the sequence is REDSWQKRLDKEIEKRRRVEEAYKNAMTELKKKSH. Positions 320–326 match the FFAT motif; the sequence is EFFDAVE. The disordered stretch occupies residues 341 to 382; sequence EKGRSHWPPSPPSSEAHTAAGSHRLVQAPPSCPPPTDLVSSS. Residues 383 to 611 enclose the START domain; it reads DEHRFRIQVE…FTSYVQEKTA (229 aa). Positions 466, 487, 524, and 572 each coordinate an N-acylsphing-4-enine.

The protein localises to the cytoplasm. It is found in the golgi apparatus. It localises to the endoplasmic reticulum. The enzyme catalyses N-hexadecanoylsphing-4-enine(in) = N-hexadecanoylsphing-4-enine(out). May mediate the intracellular trafficking of ceramide in a non-vesicular manner. This Xenopus laevis (African clawed frog) protein is Ceramide transfer protein (cert1).